Consider the following 645-residue polypeptide: Heat shock protein SSA2 (645 aa).

Ser2 bears the N-acetylserine mark. Residues 581–645 (ANQTATQEEF…NDGPTVEEVD (65 aa)) form a disordered region. The span at 611-621 (AGATPSGAAGA) shows a compositional bias: low complexity.

This sequence belongs to the heat shock protein 70 family. As to quaternary structure, binds human histatin-5, an antifungal peptide from saliva.

The protein localises to the cytoplasm. Its subcellular location is the secreted. It localises to the cell wall. In terms of biological role, heat shock protein that may play a role in the transport of polypeptides both across the mitochondrial membranes and into the endoplasmic reticulum. Acts as a highly immunodominant antigen. Plays a role in the sensitivity to, and the import of candidacidal beta-defensin peptides. HSP70/SSA1 and SSA2 bind histatin-5, a peptide from human saliva, and mediates its fungicidal activity. SSA2 facilitates fungicidal activity of Hst 5 in binding and intracellular translocation, whereas HSP70/SSA1 appears to have a lesser functional role in Hst 5 toxicity. The chain is Heat shock protein SSA2 from Candida albicans (strain SC5314 / ATCC MYA-2876) (Yeast).